Consider the following 316-residue polypeptide: Acetaldehyde dehydrogenase 3 (316 aa).

12–15 (SGNI) serves as a coordination point for NAD(+). Cysteine 132 (acyl-thioester intermediate) is an active-site residue. NAD(+)-binding positions include 163–171 (SAGPGTRAN) and asparagine 289.

It belongs to the acetaldehyde dehydrogenase family.

It catalyses the reaction acetaldehyde + NAD(+) + CoA = acetyl-CoA + NADH + H(+). This Comamonas testosteroni (Pseudomonas testosteroni) protein is Acetaldehyde dehydrogenase 3 (mhpF).